A 173-amino-acid chain; its full sequence is Globin, cuticular isoform (173 aa).

The N-terminal stretch at 1–16 (MLWFVAVCFAIASVSA) is a signal peptide. The Globin domain maps to 17-166 (MSPADVKKHT…FNSEAQHQLE (150 aa)). Histidine 113 lines the heme b pocket.

It belongs to the globin family. Expressed only by adult nematodes in the gut.

The protein resides in the secreted. It localises to the extracellular space. This chain is Globin, cuticular isoform (GLBC), found in Nippostrongylus brasiliensis (Rat hookworm).